We begin with the raw amino-acid sequence, 312 residues long: Deoxyribonuclease Tat-D (312 aa).

Residues Glu-124, His-161, His-187, and Asp-235 each contribute to the a divalent metal cation site.

It belongs to the metallo-dependent hydrolases superfamily. TatD-type hydrolase family. A divalent metal cation serves as cofactor.

The protein resides in the cytoplasm. Its subcellular location is the nucleus. In terms of biological role, has both endo- and exonuclease activities. Incises double-stranded DNA without obvious specificity via its endonuclease activity and excises the DNA from the 3'-to 5'-end by its exonuclease activity. May have a role in apoptosis. This is Deoxyribonuclease Tat-D from Schizosaccharomyces pombe (strain 972 / ATCC 24843) (Fission yeast).